Here is a 509-residue protein sequence, read N- to C-terminus: Maturase K (509 aa).

It belongs to the intron maturase 2 family. MatK subfamily.

The protein localises to the plastid. It is found in the chloroplast. In terms of biological role, usually encoded in the trnK tRNA gene intron. Probably assists in splicing its own and other chloroplast group II introns. This Metasequoia glyptostroboides (Dawn redwood) protein is Maturase K.